The following is a 127-amino-acid chain: Small ribosomal subunit protein uS11 (127 aa).

Belongs to the universal ribosomal protein uS11 family. In terms of assembly, part of the 30S ribosomal subunit. Interacts with proteins S7 and S18. Binds to IF-3.

In terms of biological role, located on the platform of the 30S subunit, it bridges several disparate RNA helices of the 16S rRNA. Forms part of the Shine-Dalgarno cleft in the 70S ribosome. The sequence is that of Small ribosomal subunit protein uS11 from Chlorobium limicola (strain DSM 245 / NBRC 103803 / 6330).